The following is a 106-amino-acid chain: NADH dehydrogenase [ubiquinone] 1 alpha subcomplex subunit 8-B (106 aa).

Ser-2 is subject to N-acetylserine. 2 CHCH domains span residues 26–67 (GMRC…LKDL) and 68–106 (HQKC…CPLK). Short sequence motifs (cx9C motif) lie at residues 29 to 39 (CMPENVAFLKC), 49 to 59 (CLDKGRDVTRC), and 71 to 81 (CQKEMDDYVGC). 4 disulfides stabilise this stretch: Cys-29-Cys-59, Cys-39-Cys-49, Cys-71-Cys-103, and Cys-81-Cys-92. The short motif at 92–103 (CRKEQEAFEKVC) is the Cx10C motif element.

Belongs to the complex I NDUFA8 subunit family. In terms of assembly, complex I is composed of at least 49 different subunits.

It localises to the mitochondrion. The protein resides in the mitochondrion intermembrane space. Functionally, accessory subunit of the mitochondrial membrane respiratory chain NADH dehydrogenase (Complex I), that is believed not to be involved in catalysis. Complex I functions in the transfer of electrons from NADH to the respiratory chain. The immediate electron acceptor for the enzyme is believed to be ubiquinone. In Arabidopsis thaliana (Mouse-ear cress), this protein is NADH dehydrogenase [ubiquinone] 1 alpha subcomplex subunit 8-B.